The following is a 264-amino-acid chain: Undecaprenyl-diphosphatase (264 aa).

8 consecutive transmembrane segments (helical) span residues 1-21 (MEISHVIVLALVQGISEFLPI), 39-59 (QGLAFDVAVHVGTLSAILFYF), 83-103 (SLLVWCVGFATIPVGIFGLLF), 113-133 (SGVVIAVTTIIFGIALYFADL), 143-163 (MTIKFALIIGLAQAVALIPGV), 184-204 (ANFSFLLSIPVIILAGGLESI), 220-240 (LGVIISAVSAYICVKLFMGII), and 243-263 (IRMLPFVIYRLILGAFLLYLF).

The protein belongs to the UppP family.

The protein localises to the cell inner membrane. The enzyme catalyses di-trans,octa-cis-undecaprenyl diphosphate + H2O = di-trans,octa-cis-undecaprenyl phosphate + phosphate + H(+). Functionally, catalyzes the dephosphorylation of undecaprenyl diphosphate (UPP). Confers resistance to bacitracin. The protein is Undecaprenyl-diphosphatase of Campylobacter concisus (strain 13826).